A 233-amino-acid chain; its full sequence is Orotidine 5'-phosphate decarboxylase (233 aa).

Substrate contacts are provided by residues D9, K31, 58-67, T120, R182, Q191, G211, and R212; that span reads DLKLHDIPNT. The Proton donor role is filled by K60.

The protein belongs to the OMP decarboxylase family. Type 1 subfamily. As to quaternary structure, homodimer.

The catalysed reaction is orotidine 5'-phosphate + H(+) = UMP + CO2. The protein operates within pyrimidine metabolism; UMP biosynthesis via de novo pathway; UMP from orotate: step 2/2. In terms of biological role, catalyzes the decarboxylation of orotidine 5'-monophosphate (OMP) to uridine 5'-monophosphate (UMP). In Listeria innocua serovar 6a (strain ATCC BAA-680 / CLIP 11262), this protein is Orotidine 5'-phosphate decarboxylase.